The primary structure comprises 608 residues: Pentatricopeptide repeat-containing protein 1, apicoplast (608 aa).

PPR repeat units lie at residues threonine 165–proline 199, aspartate 200–serine 230, asparagine 236–glutamate 270, glutamine 336–methionine 370, serine 372–aspartate 402, asparagine 410–proline 445, and asparagine 446–asparagine 480.

This sequence belongs to the PPR family. P subfamily. As to quaternary structure, homodimer.

It localises to the plastid. The protein resides in the apicoplast. Functionally, binds to apicoplast RNA transcripts, preferentially to the motif UUAU, and protects RNA transcripts from degradation by ribonuclease. In Plasmodium falciparum (isolate 3D7), this protein is Pentatricopeptide repeat-containing protein 1, apicoplast.